Reading from the N-terminus, the 115-residue chain is NADH-ubiquinone oxidoreductase chain 3 (115 aa).

The next 3 helical transmembrane spans lie at 3 to 23, 55 to 75, and 86 to 106; these read IMLT…IAFW, FFLV…LLPL, and TMLT…AYEW.

This sequence belongs to the complex I subunit 3 family. As to quaternary structure, core subunit of respiratory chain NADH dehydrogenase (Complex I) which is composed of 45 different subunits. Interacts with TMEM186. Interacts with TMEM242.

It is found in the mitochondrion inner membrane. It catalyses the reaction a ubiquinone + NADH + 5 H(+)(in) = a ubiquinol + NAD(+) + 4 H(+)(out). In terms of biological role, core subunit of the mitochondrial membrane respiratory chain NADH dehydrogenase (Complex I) which catalyzes electron transfer from NADH through the respiratory chain, using ubiquinone as an electron acceptor. Essential for the catalytic activity of complex I. This Sus scrofa (Pig) protein is NADH-ubiquinone oxidoreductase chain 3.